We begin with the raw amino-acid sequence, 426 residues long: D-tagatose-1,6-bisphosphate aldolase subunit KbaZ (426 aa).

Belongs to the GatZ/KbaZ family. KbaZ subfamily. As to quaternary structure, forms a complex with KbaY.

It participates in carbohydrate metabolism; D-tagatose 6-phosphate degradation; D-glyceraldehyde 3-phosphate and glycerone phosphate from D-tagatose 6-phosphate: step 2/2. Functionally, component of the tagatose-1,6-bisphosphate aldolase KbaYZ that is required for full activity and stability of the Y subunit. Could have a chaperone-like function for the proper and stable folding of KbaY. When expressed alone, KbaZ does not show any aldolase activity. This chain is D-tagatose-1,6-bisphosphate aldolase subunit KbaZ, found in Escherichia coli O8 (strain IAI1).